The sequence spans 405 residues: 26S proteasome regulatory subunit 8 homolog (405 aa).

Residue Thr-2 is modified to N-acetylthreonine. 189–196 (GPPGTGKT) contributes to the ATP binding site.

The protein belongs to the AAA ATPase family. May form a homodimer or a heterodimer with a related family member. Interacts with OLA1, TMA17, and UBR1. Post-translationally, N-acetylated by NAT1.

The protein resides in the cytoplasm. It localises to the nucleus. Its function is as follows. The 26S proteasome is involved in the ATP-dependent degradation of ubiquitinated proteins. The regulatory (or ATPase) complex confers ATP dependency and substrate specificity to the 26S complex. The sequence is that of 26S proteasome regulatory subunit 8 homolog (RPT6) from Saccharomyces cerevisiae (strain ATCC 204508 / S288c) (Baker's yeast).